Here is a 465-residue protein sequence, read N- to C-terminus: Ribulose bisphosphate carboxylase large chain (465 aa).

An N6,N6,N6-trimethyllysine modification is found at Lys4. Residues Asn113 and Thr163 each contribute to the substrate site. The active-site Proton acceptor is Lys165. A substrate-binding site is contributed by Lys167. Residues Lys191, Asp193, and Glu194 each contribute to the Mg(2+) site. Lys191 carries the post-translational modification N6-carboxylysine. His284 serves as the catalytic Proton acceptor. Arg285, His317, and Ser369 together coordinate substrate.

The protein belongs to the RuBisCO large chain family. Type I subfamily. As to quaternary structure, heterohexadecamer of 8 large chains and 8 small chains; disulfide-linked. The disulfide link is formed within the large subunit homodimers. Mg(2+) serves as cofactor. Post-translationally, the disulfide bond which can form in the large chain dimeric partners within the hexadecamer appears to be associated with oxidative stress and protein turnover.

The protein localises to the plastid. The protein resides in the chloroplast. The enzyme catalyses 2 (2R)-3-phosphoglycerate + 2 H(+) = D-ribulose 1,5-bisphosphate + CO2 + H2O. It carries out the reaction D-ribulose 1,5-bisphosphate + O2 = 2-phosphoglycolate + (2R)-3-phosphoglycerate + 2 H(+). Functionally, ruBisCO catalyzes two reactions: the carboxylation of D-ribulose 1,5-bisphosphate, the primary event in carbon dioxide fixation, as well as the oxidative fragmentation of the pentose substrate in the photorespiration process. Both reactions occur simultaneously and in competition at the same active site. In Cornus florida (Flowering dogwood), this protein is Ribulose bisphosphate carboxylase large chain.